Reading from the N-terminus, the 164-residue chain is UPF0178 protein RPB_3201 (164 aa).

This sequence belongs to the UPF0178 family.

This Rhodopseudomonas palustris (strain HaA2) protein is UPF0178 protein RPB_3201.